The following is a 611-amino-acid chain: UvrABC system protein C (611 aa).

Residues 14-91 (TSPGCYIHKD…IKENQPKYNI (78 aa)) form the GIY-YIG domain. The region spanning 196-231 (DQIIEDLRGKMAGAAQAMEFEKAAEYRDLIQSIGTL) is the UVR domain. The segment at 587 to 611 (KLNPKTQEQEQAQLREVAEPQIGLE) is disordered.

Belongs to the UvrC family. Interacts with UvrB in an incision complex.

Its subcellular location is the cytoplasm. Its function is as follows. The UvrABC repair system catalyzes the recognition and processing of DNA lesions. UvrC both incises the 5' and 3' sides of the lesion. The N-terminal half is responsible for the 3' incision and the C-terminal half is responsible for the 5' incision. The sequence is that of UvrABC system protein C from Streptococcus sanguinis (strain SK36).